The primary structure comprises 381 residues: Protein pelota homolog (381 aa).

It belongs to the eukaryotic release factor 1 family. Pelota subfamily. In terms of assembly, component of the Pelota-HBS1L complex, also named Dom34-Hbs1 complex, composed of pelo-1 and hbs-1. The cofactor is a divalent metal cation.

It is found in the cytoplasm. The protein localises to the nucleus. Functionally, component of the Pelota-HBS1L complex, a complex that recognizes stalled ribosomes and triggers the No-Go Decay (NGD) pathway. In the Pelota-HBS1L complex, pelo-1 recognizes ribosomes stalled at the 3' end of an mRNA and engages stalled ribosomes by destabilizing mRNA in the mRNA channel. Following ribosome-binding, the Pelota-HBS1L complex promotes the disassembly of stalled ribosomes, followed by degradation of damaged mRNAs as part of the NGD pathway. The polypeptide is Protein pelota homolog (Caenorhabditis elegans).